The chain runs to 212 residues: Interleukin-6 (212 aa).

The N-terminal stretch at 1-29 is a signal peptide; that stretch reads MTSFSTSAFRPVAFSLGLLLVMPAAFPAP. Cys72 and Cys78 form a disulfide bridge. N-linked (GlcNAc...) asparagine glycosylation occurs at Asn73. The residue at position 81 (Ser81) is a Phosphoserine. Cys101 and Cys111 form a disulfide bridge. N-linked (GlcNAc...) asparagine glycosylation is found at Asn160 and Asn172.

The protein belongs to the IL-6 superfamily. In terms of assembly, component of a hexamer of two molecules each of IL6, IL6R and IL6ST; first binds to IL6R to associate with the signaling subunit IL6ST. Interacts with IL6R (via the N-terminal ectodomain); this interaction may be affected by IL6R-binding with SORL1, hence decreasing IL6 cis signaling. Interacts with SORL1 (via the N-terminal ectodomain); this interaction leads to IL6 internalization and lysosomal degradation. May form a trimeric complex with the soluble SORL1 ectodomain and soluble IL6R receptor; this interaction might stabilize circulating IL6, hence promoting IL6 trans signaling.

The protein localises to the secreted. Functionally, cytokine with a wide variety of biological functions in immunity, tissue regeneration, and metabolism. Binds to IL6R, then the complex associates to the signaling subunit IL6ST/gp130 to trigger the intracellular IL6-signaling pathway. The interaction with the membrane-bound IL6R and IL6ST stimulates 'classic signaling', whereas the binding of IL6 and soluble IL6R to IL6ST stimulates 'trans-signaling'. Alternatively, 'cluster signaling' occurs when membrane-bound IL6:IL6R complexes on transmitter cells activate IL6ST receptors on neighboring receiver cells. In terms of biological role, IL6 is a potent inducer of the acute phase response. Rapid production of IL6 contributes to host defense during infection and tissue injury, but excessive IL6 synthesis is involved in disease pathology. In the innate immune response, is synthesized by myeloid cells, such as macrophages and dendritic cells, upon recognition of pathogens through toll-like receptors (TLRs) at the site of infection or tissue injury. In the adaptive immune response, is required for the differentiation of B cells into immunoglobulin-secreting cells. Plays a major role in the differentiation of CD4(+) T cell subsets. Essential factor for the development of T follicular helper (Tfh) cells that are required for the induction of germinal-center formation. Required to drive naive CD4(+) T cells to the Th17 lineage. Also required for proliferation of myeloma cells and the survival of plasmablast cells. Acts as an essential factor in bone homeostasis and on vessels directly or indirectly by induction of VEGF, resulting in increased angiogenesis activity and vascular permeability. Induces, through 'trans-signaling' and synergistically with IL1B and TNF, the production of VEGF. Involved in metabolic controls, is discharged into the bloodstream after muscle contraction increasing lipolysis and improving insulin resistance. 'Trans-signaling' in central nervous system also regulates energy and glucose homeostasis. Mediates, through GLP-1, crosstalk between insulin-sensitive tissues, intestinal L cells and pancreatic islets to adapt to changes in insulin demand. Also acts as a myokine. Plays a protective role during liver injury, being required for maintenance of tissue regeneration. Also has a pivotal role in iron metabolism by regulating HAMP/hepcidin expression upon inflammation or bacterial infection. Through activation of IL6ST-YAP-NOTCH pathway, induces inflammation-induced epithelial regeneration. The protein is Interleukin-6 (IL6) of Saimiri sciureus (Common squirrel monkey).